The following is a 207-amino-acid chain: Outer-membrane lipoprotein LolB (207 aa).

An N-terminal signal peptide occupies residues 1 to 21; sequence MPLPDFRLIRLLPLAALVLTA. Cys22 carries N-palmitoyl cysteine lipidation. The S-diacylglycerol cysteine moiety is linked to residue Cys22.

It belongs to the LolB family. As to quaternary structure, monomer.

It localises to the cell outer membrane. In terms of biological role, plays a critical role in the incorporation of lipoproteins in the outer membrane after they are released by the LolA protein. The chain is Outer-membrane lipoprotein LolB from Shigella dysenteriae serotype 1 (strain Sd197).